The following is a 294-amino-acid chain: 4-hydroxy-tetrahydrodipicolinate synthase (294 aa).

Position 47 (threonine 47) interacts with pyruvate. The active-site Proton donor/acceptor is the tyrosine 136. Residue lysine 164 is the Schiff-base intermediate with substrate of the active site. Residue valine 206 participates in pyruvate binding.

Belongs to the DapA family. In terms of assembly, homotetramer; dimer of dimers.

Its subcellular location is the cytoplasm. It carries out the reaction L-aspartate 4-semialdehyde + pyruvate = (2S,4S)-4-hydroxy-2,3,4,5-tetrahydrodipicolinate + H2O + H(+). It participates in amino-acid biosynthesis; L-lysine biosynthesis via DAP pathway; (S)-tetrahydrodipicolinate from L-aspartate: step 3/4. Catalyzes the condensation of (S)-aspartate-beta-semialdehyde [(S)-ASA] and pyruvate to 4-hydroxy-tetrahydrodipicolinate (HTPA). This chain is 4-hydroxy-tetrahydrodipicolinate synthase, found in Nostoc punctiforme (strain ATCC 29133 / PCC 73102).